Consider the following 145-residue polypeptide: D-aminoacyl-tRNA deacylase (145 aa).

The Gly-cisPro motif, important for rejection of L-amino acids motif lies at 137–138 (GP).

The protein belongs to the DTD family. In terms of assembly, homodimer.

The protein resides in the cytoplasm. The enzyme catalyses glycyl-tRNA(Ala) + H2O = tRNA(Ala) + glycine + H(+). It carries out the reaction a D-aminoacyl-tRNA + H2O = a tRNA + a D-alpha-amino acid + H(+). An aminoacyl-tRNA editing enzyme that deacylates mischarged D-aminoacyl-tRNAs. Also deacylates mischarged glycyl-tRNA(Ala), protecting cells against glycine mischarging by AlaRS. Acts via tRNA-based rather than protein-based catalysis; rejects L-amino acids rather than detecting D-amino acids in the active site. By recycling D-aminoacyl-tRNA to D-amino acids and free tRNA molecules, this enzyme counteracts the toxicity associated with the formation of D-aminoacyl-tRNA entities in vivo and helps enforce protein L-homochirality. This chain is D-aminoacyl-tRNA deacylase, found in Salmonella typhi.